The chain runs to 611 residues: Threonine--tRNA ligase (611 aa).

The tract at residues 1-27 (MAGPEPEPVSSAAATTPAPSAPVVLPK) is disordered. Residues 8-24 (PVSSAAATTPAPSAPVV) show a composition bias toward low complexity. The tract at residues 209–502 (DHRRIGKDLD…MTENYAGDYP (294 aa)) is catalytic. Positions 302, 353, and 479 each coordinate Zn(2+).

This sequence belongs to the class-II aminoacyl-tRNA synthetase family. In terms of assembly, homodimer. Zn(2+) is required as a cofactor.

The protein resides in the cytoplasm. The enzyme catalyses tRNA(Thr) + L-threonine + ATP = L-threonyl-tRNA(Thr) + AMP + diphosphate + H(+). In terms of biological role, catalyzes the attachment of threonine to tRNA(Thr) in a two-step reaction: L-threonine is first activated by ATP to form Thr-AMP and then transferred to the acceptor end of tRNA(Thr). Also edits incorrectly charged L-seryl-tRNA(Thr). This chain is Threonine--tRNA ligase, found in Synechococcus sp. (strain CC9605).